A 94-amino-acid polypeptide reads, in one-letter code: Small ribosomal subunit protein uS19c (94 aa).

This sequence belongs to the universal ribosomal protein uS19 family.

It is found in the plastid. The protein resides in the chloroplast. Protein S19 forms a complex with S13 that binds strongly to the 16S ribosomal RNA. This chain is Small ribosomal subunit protein uS19c, found in Pleurastrum terricola (Filamentous green alga).